We begin with the raw amino-acid sequence, 359 residues long: 2-epi-5-epi-valiolone 7-kinase (359 aa).

Positions 28–48 (GGLGEVHTTPSPGHARRPGAG) are disordered.

This sequence belongs to the ROK (NagC/XylR) family.

It catalyses the reaction 2-epi-5-epi-valiolone + ATP = 2-epi-5-epi-valiolone 7-phosphate + ADP + H(+). Functionally, catalyzes the conversion of 2-epi-5-epi-valiolone to 2-epi-5-epi-valiolone 7-phosphate. Involved in the biosynthesis of the acarviose moiety of the alpha-glucosidase inhibitor acarbose. The sequence is that of 2-epi-5-epi-valiolone 7-kinase from Actinoplanes sp. (strain ATCC 31044 / CBS 674.73 / SE50/110).